A 115-amino-acid polypeptide reads, in one-letter code: Large ribosomal subunit protein uL22 (115 aa).

This sequence belongs to the universal ribosomal protein uL22 family. In terms of assembly, part of the 50S ribosomal subunit.

Functionally, this protein binds specifically to 23S rRNA; its binding is stimulated by other ribosomal proteins, e.g. L4, L17, and L20. It is important during the early stages of 50S assembly. It makes multiple contacts with different domains of the 23S rRNA in the assembled 50S subunit and ribosome. In terms of biological role, the globular domain of the protein is located near the polypeptide exit tunnel on the outside of the subunit, while an extended beta-hairpin is found that lines the wall of the exit tunnel in the center of the 70S ribosome. The sequence is that of Large ribosomal subunit protein uL22 from Streptomyces avermitilis (strain ATCC 31267 / DSM 46492 / JCM 5070 / NBRC 14893 / NCIMB 12804 / NRRL 8165 / MA-4680).